The sequence spans 227 residues: Cytochrome c oxidase subunit 2 (227 aa).

Topologically, residues 1 to 14 (MAYPFQLGLQDATS) are mitochondrial intermembrane. The helical transmembrane segment at 15–45 (PIMEELTNFHDHTLMIVFLISSLVLYIISLM) threads the bilayer. The Mitochondrial matrix portion of the chain corresponds to 46-59 (LTTKLTHTNTMDAQ). A helical membrane pass occupies residues 60–87 (EVETIWTILPAVILILIALPSLRILYMM). The Mitochondrial intermembrane segment spans residues 88–227 (DEINNPALTV…HFENWSASMI (140 aa)). Cu cation contacts are provided by His-161, Cys-196, Glu-198, Cys-200, His-204, and Met-207. Glu-198 serves as a coordination point for Mg(2+).

The protein belongs to the cytochrome c oxidase subunit 2 family. As to quaternary structure, component of the cytochrome c oxidase (complex IV, CIV), a multisubunit enzyme composed of 14 subunits. The complex is composed of a catalytic core of 3 subunits MT-CO1, MT-CO2 and MT-CO3, encoded in the mitochondrial DNA, and 11 supernumerary subunits COX4I, COX5A, COX5B, COX6A, COX6B, COX6C, COX7A, COX7B, COX7C, COX8 and NDUFA4, which are encoded in the nuclear genome. The complex exists as a monomer or a dimer and forms supercomplexes (SCs) in the inner mitochondrial membrane with NADH-ubiquinone oxidoreductase (complex I, CI) and ubiquinol-cytochrome c oxidoreductase (cytochrome b-c1 complex, complex III, CIII), resulting in different assemblies (supercomplex SCI(1)III(2)IV(1) and megacomplex MCI(2)III(2)IV(2)). Found in a complex with TMEM177, COA6, COX18, COX20, SCO1 and SCO2. Interacts with TMEM177 in a COX20-dependent manner. Interacts with COX20. Interacts with COX16. Cu cation is required as a cofactor.

It is found in the mitochondrion inner membrane. The enzyme catalyses 4 Fe(II)-[cytochrome c] + O2 + 8 H(+)(in) = 4 Fe(III)-[cytochrome c] + 2 H2O + 4 H(+)(out). Its function is as follows. Component of the cytochrome c oxidase, the last enzyme in the mitochondrial electron transport chain which drives oxidative phosphorylation. The respiratory chain contains 3 multisubunit complexes succinate dehydrogenase (complex II, CII), ubiquinol-cytochrome c oxidoreductase (cytochrome b-c1 complex, complex III, CIII) and cytochrome c oxidase (complex IV, CIV), that cooperate to transfer electrons derived from NADH and succinate to molecular oxygen, creating an electrochemical gradient over the inner membrane that drives transmembrane transport and the ATP synthase. Cytochrome c oxidase is the component of the respiratory chain that catalyzes the reduction of oxygen to water. Electrons originating from reduced cytochrome c in the intermembrane space (IMS) are transferred via the dinuclear copper A center (CU(A)) of subunit 2 and heme A of subunit 1 to the active site in subunit 1, a binuclear center (BNC) formed by heme A3 and copper B (CU(B)). The BNC reduces molecular oxygen to 2 water molecules using 4 electrons from cytochrome c in the IMS and 4 protons from the mitochondrial matrix. This chain is Cytochrome c oxidase subunit 2 (MT-CO2), found in Sundamys muelleri (Mueller's giant sunda rat).